We begin with the raw amino-acid sequence, 315 residues long: KH domain-containing protein At5g56140 (315 aa).

Disordered regions lie at residues 1 to 53 (MMMM…GGLR) and 136 to 158 (SQFP…SPGS). Residues 7–28 (LGGGGGGGGGSGGGIGGGGGGR) are compositionally biased toward gly residues. Polar residues-rich tracts occupy residues 31–53 (TYSS…GGLR) and 136–146 (SQFPSERSVPS). Positions 171–238 (DIPVDNYPNF…EHLNEPLHIL (68 aa)) constitute a KH domain. Residues 289–315 (REEGSPMSGSVSPYNSLGMKRAKTREG) form a disordered region. The residue at position 300 (S300) is a Phosphoserine.

The protein localises to the nucleus. This is KH domain-containing protein At5g56140 from Arabidopsis thaliana (Mouse-ear cress).